Reading from the N-terminus, the 93-residue chain is Large ribosomal subunit protein uL23cz/uL23cy (93 aa).

The protein belongs to the universal ribosomal protein uL23 family. Part of the 50S ribosomal subunit.

Its subcellular location is the plastid. It localises to the chloroplast. Binds to 23S rRNA. The polypeptide is Large ribosomal subunit protein uL23cz/uL23cy (rpl23-A) (Drimys granadensis).